Here is a 433-residue protein sequence, read N- to C-terminus: Keratin, type I cytoskeletal 17 (433 aa).

Positions 1-24 (MTTTIRQFTSSSSIKGSSGLGGGS) are disordered. The tract at residues 1 to 83 (MTTTIRQFTS…GGVDGLLAGG (83 aa)) is head. A phosphoserine mark is found at S12 and S13. Residue K15 forms a Glycyl lysine isopeptide (Lys-Gly) (interchain with G-Cter in SUMO1); alternate linkage. K15 is covalently cross-linked (Glycyl lysine isopeptide (Lys-Gly) (interchain with G-Cter in SUMO2); alternate). A phosphoserine mark is found at S25, S32, S34, and S39. S44 is modified (phosphoserine; by RPS6KA1). Residues 84–120 (EKATMQNLNDRLASYLDKVRALEEANTELEVKIRDWY) form a coil 1A region. One can recognise an IF rod domain in the interval 84–395 (EKATMQNLND…RLLEGEDAHL (312 aa)). T110 is subject to Phosphothreonine. Residues 121–138 (QKQAPGPARDYSAYYHTI) form a linker 1 region. The segment at 139-230 (EDLKNKILVA…NHEEEMNALR (92 aa)) is coil 1B. The tract at residues 231 to 250 (GQVGGEINVEMDAAPGVDLS) is linker 12. Residues 251–392 (RILSEMRDQY…TYRRLLEGED (142 aa)) form a coil 2 region. Residue K278 forms a Glycyl lysine isopeptide (Lys-Gly) (interchain with G-Cter in SUMO2) linkage. The residue at position 279 (T279) is a Phosphothreonine. S323 is modified (phosphoserine). Positions 393–433 (AHLTQYKPKEPVTTRQVRTIVEEVQDGKVISSREQVHQTTR) are tail. Residues K399, K401, and K420 each participate in a glycyl lysine isopeptide (Lys-Gly) (interchain with G-Cter in SUMO1); alternate cross-link. Residues K399, K401, and K420 each participate in a glycyl lysine isopeptide (Lys-Gly) (interchain with G-Cter in SUMO2); alternate cross-link.

The protein belongs to the intermediate filament family. As to quaternary structure, heterodimer of a type I and a type II keratin. KRT17 associates with KRT6 isomers (KRT6A or KRT6B). Interacts with TRADD and SFN. Phosphorylation at Ser-44 occurs in a growth- and stress-dependent fashion in skin keratinocytes, it has no effect on filament organization. As to expression, expressed strongly in outer root sheath and medulla region of hair follicle and in the early differentiating epithelial cells (trichocytes) within the hair bulb region. Weak expression in the matrix cells of hair bulb. Also present in the sweat gland within the skin, vibrissae follicle, salivary gland, tooth and thymus.

It localises to the cytoplasm. In terms of biological role, type I keratin involved in the formation and maintenance of various skin appendages, specifically in determining shape and orientation of hair. Required for the correct growth of hair follicles, in particular for the persistence of the anagen (growth) state. Modulates the function of TNF-alpha in the specific context of hair cycling. Regulates protein synthesis and epithelial cell growth through binding to the adapter protein SFN and by stimulating Akt/mTOR pathway. Involved in tissue repair. May be a marker of basal cell differentiation in complex epithelia and therefore indicative of a certain type of epithelial 'stem cells'. Acts as a promoter of epithelial proliferation by acting a regulator of immune response in skin: promotes Th1/Th17-dominated immune environment contributing to the development of basaloid skin tumors. May act as an autoantigen in the immunopathogenesis of psoriasis, with certain peptide regions being a major target for autoreactive T-cells and hence causing their proliferation. The chain is Keratin, type I cytoskeletal 17 (Krt17) from Mus musculus (Mouse).